The sequence spans 317 residues: Acetylglutamate kinase (317 aa).

Substrate-binding positions include 70 to 71 (GG), arginine 92, and asparagine 191.

It belongs to the acetylglutamate kinase family. ArgB subfamily.

The protein resides in the cytoplasm. It carries out the reaction N-acetyl-L-glutamate + ATP = N-acetyl-L-glutamyl 5-phosphate + ADP. It participates in amino-acid biosynthesis; L-arginine biosynthesis; N(2)-acetyl-L-ornithine from L-glutamate: step 2/4. Functionally, catalyzes the ATP-dependent phosphorylation of N-acetyl-L-glutamate. The chain is Acetylglutamate kinase from Corynebacterium glutamicum (strain R).